The following is a 343-amino-acid chain: MDIVLATGGTGGHIFPAITLARAIKRQGYDSILFADKKTGKNTDVKDYTLPLNKPGGNKFRFFLLLIYSCVLALYQIRKLKPKLVIGFGGYASFPTLLAAKVLSIPIILHEQNAVLGRVNKFFFNSAELIATSFPETKYAKGNKCVFIGNFVDIKAKSHSSTKKILTVLIIAGSQGANFFDDVVSSVICNLPIEIRKKIRVVQQCMKKNMNKVEGLYKGGQVICELSEFFDDMGSRLTDAHLVISRAGATSIAEITLARRPAIYIPYPCSKDDHQFYNAEYIKDSGAAVVVEQNSEVKKNLTKLLVNLLGDSQKLRDMANNTKKIRIKNGVTEFIRIVIHKLG.

UDP-N-acetyl-alpha-D-glucosamine is bound by residues Thr-10–Gly-12, Asn-113, Ser-174, and Gln-275.

This sequence belongs to the glycosyltransferase 28 family. MurG subfamily.

The protein localises to the cell membrane. It catalyses the reaction di-trans,octa-cis-undecaprenyl diphospho-N-acetyl-alpha-D-muramoyl-L-alanyl-D-glutamyl-meso-2,6-diaminopimeloyl-D-alanyl-D-alanine + UDP-N-acetyl-alpha-D-glucosamine = di-trans,octa-cis-undecaprenyl diphospho-[N-acetyl-alpha-D-glucosaminyl-(1-&gt;4)]-N-acetyl-alpha-D-muramoyl-L-alanyl-D-glutamyl-meso-2,6-diaminopimeloyl-D-alanyl-D-alanine + UDP + H(+). It functions in the pathway cell wall biogenesis; peptidoglycan biosynthesis. In terms of biological role, cell wall formation. Catalyzes the transfer of a GlcNAc subunit on undecaprenyl-pyrophosphoryl-MurNAc-pentapeptide (lipid intermediate I) to form undecaprenyl-pyrophosphoryl-MurNAc-(pentapeptide)GlcNAc (lipid intermediate II). This chain is UDP-N-acetylglucosamine--N-acetylmuramyl-(pentapeptide) pyrophosphoryl-undecaprenol N-acetylglucosamine transferase, found in Wolbachia sp. subsp. Brugia malayi (strain TRS).